The chain runs to 302 residues: Quinolinate synthase (302 aa).

Iminosuccinate-binding residues include histidine 24 and serine 41. Cysteine 86 is a binding site for [4Fe-4S] cluster. Iminosuccinate is bound by residues 112–114 and serine 129; that span reads YVN. Cysteine 173 contributes to the [4Fe-4S] cluster binding site. Iminosuccinate is bound by residues 199–201 and threonine 216; that span reads HPE. Cysteine 259 is a binding site for [4Fe-4S] cluster.

Belongs to the quinolinate synthase family. Type 2 subfamily. Requires [4Fe-4S] cluster as cofactor.

The protein localises to the cytoplasm. The enzyme catalyses iminosuccinate + dihydroxyacetone phosphate = quinolinate + phosphate + 2 H2O + H(+). Its pathway is cofactor biosynthesis; NAD(+) biosynthesis; quinolinate from iminoaspartate: step 1/1. In terms of biological role, catalyzes the condensation of iminoaspartate with dihydroxyacetone phosphate to form quinolinate. This chain is Quinolinate synthase, found in Thermococcus kodakarensis (strain ATCC BAA-918 / JCM 12380 / KOD1) (Pyrococcus kodakaraensis (strain KOD1)).